A 317-amino-acid chain; its full sequence is Phospho-N-acetylmuramoyl-pentapeptide-transferase (317 aa).

The next 9 membrane-spanning stretches (helical) occupy residues 3-23 (VIIY…PLFI), 48-68 (GTPT…MIIM), 72-92 (LNSN…IGLI), 112-132 (FLLQ…RFGS), 141-161 (ITWT…FVAV), 171-191 (LDGL…VVSF), 193-213 (WHQY…LGFL), 238-258 (AIAL…IYVI), and 297-317 (VVSV…LSLI).

The protein belongs to the glycosyltransferase 4 family. MraY subfamily. Mg(2+) is required as a cofactor.

It localises to the cell membrane. The enzyme catalyses UDP-N-acetyl-alpha-D-muramoyl-L-alanyl-gamma-D-glutamyl-meso-2,6-diaminopimeloyl-D-alanyl-D-alanine + di-trans,octa-cis-undecaprenyl phosphate = di-trans,octa-cis-undecaprenyl diphospho-N-acetyl-alpha-D-muramoyl-L-alanyl-D-glutamyl-meso-2,6-diaminopimeloyl-D-alanyl-D-alanine + UMP. It participates in cell wall biogenesis; peptidoglycan biosynthesis. Catalyzes the initial step of the lipid cycle reactions in the biosynthesis of the cell wall peptidoglycan: transfers peptidoglycan precursor phospho-MurNAc-pentapeptide from UDP-MurNAc-pentapeptide onto the lipid carrier undecaprenyl phosphate, yielding undecaprenyl-pyrophosphoryl-MurNAc-pentapeptide, known as lipid I. The protein is Phospho-N-acetylmuramoyl-pentapeptide-transferase of Clostridium acetobutylicum (strain ATCC 824 / DSM 792 / JCM 1419 / IAM 19013 / LMG 5710 / NBRC 13948 / NRRL B-527 / VKM B-1787 / 2291 / W).